A 133-amino-acid polypeptide reads, in one-letter code: ATP synthase epsilon chain, chloroplastic (133 aa).

Belongs to the ATPase epsilon chain family. In terms of assembly, F-type ATPases have 2 components, CF(1) - the catalytic core - and CF(0) - the membrane proton channel. CF(1) has five subunits: alpha(3), beta(3), gamma(1), delta(1), epsilon(1). CF(0) has three main subunits: a, b and c.

The protein localises to the plastid. It localises to the chloroplast thylakoid membrane. Functionally, produces ATP from ADP in the presence of a proton gradient across the membrane. This chain is ATP synthase epsilon chain, chloroplastic, found in Helianthus annuus (Common sunflower).